Reading from the N-terminus, the 254-residue chain is 4-hydroxy-tetrahydrodipicolinate reductase (254 aa).

Residues 8-13, D35, 86-88, and 110-113 contribute to the NAD(+) site; these read GCSGKM, CST, and SANM. H143 serves as the catalytic Proton donor/acceptor. H144 contributes to the (S)-2,3,4,5-tetrahydrodipicolinate binding site. K147 acts as the Proton donor in catalysis. (S)-2,3,4,5-tetrahydrodipicolinate is bound at residue 153 to 154; the sequence is GT.

The protein belongs to the DapB family.

It is found in the cytoplasm. The catalysed reaction is (S)-2,3,4,5-tetrahydrodipicolinate + NAD(+) + H2O = (2S,4S)-4-hydroxy-2,3,4,5-tetrahydrodipicolinate + NADH + H(+). It catalyses the reaction (S)-2,3,4,5-tetrahydrodipicolinate + NADP(+) + H2O = (2S,4S)-4-hydroxy-2,3,4,5-tetrahydrodipicolinate + NADPH + H(+). Its pathway is amino-acid biosynthesis; L-lysine biosynthesis via DAP pathway; (S)-tetrahydrodipicolinate from L-aspartate: step 4/4. In terms of biological role, catalyzes the conversion of 4-hydroxy-tetrahydrodipicolinate (HTPA) to tetrahydrodipicolinate. The polypeptide is 4-hydroxy-tetrahydrodipicolinate reductase (Clostridium perfringens (strain SM101 / Type A)).